The primary structure comprises 122 residues: Small ribosomal subunit protein uS13 (122 aa).

Residues 94 to 122 (GLPVRGQVTQKNARTRKGPRKTVAGKKGK) form a disordered region. Over residues 106–122 (ARTRKGPRKTVAGKKGK) the composition is skewed to basic residues.

This sequence belongs to the universal ribosomal protein uS13 family. Part of the 30S ribosomal subunit. Forms a loose heterodimer with protein S19. Forms two bridges to the 50S subunit in the 70S ribosome.

Located at the top of the head of the 30S subunit, it contacts several helices of the 16S rRNA. In the 70S ribosome it contacts the 23S rRNA (bridge B1a) and protein L5 of the 50S subunit (bridge B1b), connecting the 2 subunits; these bridges are implicated in subunit movement. Contacts the tRNAs in the A and P-sites. In Mycoplasma mobile (strain ATCC 43663 / 163K / NCTC 11711) (Mesomycoplasma mobile), this protein is Small ribosomal subunit protein uS13.